A 163-amino-acid polypeptide reads, in one-letter code: MASTYSFDIVSDFDRQELVNAVDQVIRDLKSRYDLKDTQTTVELGEEKITIGTDSEFTLESVHNILREKAAKRNLSQKIFDFGKVESASGNRVRQEITLKKGISQDIAKQISKLIRDEFKKVQASIQGDAVRVSAKAKDDLQIVIQRLKQEDYPVALQFTNYR.

The protein belongs to the YajQ family.

In terms of biological role, nucleotide-binding protein. In Nostoc sp. (strain PCC 7120 / SAG 25.82 / UTEX 2576), this protein is Nucleotide-binding protein all4662.